Reading from the N-terminus, the 466-residue chain is Argininosuccinate lyase (466 aa).

The protein belongs to the lyase 1 family. Argininosuccinate lyase subfamily.

The protein localises to the cytoplasm. The catalysed reaction is 2-(N(omega)-L-arginino)succinate = fumarate + L-arginine. It participates in amino-acid biosynthesis; L-arginine biosynthesis; L-arginine from L-ornithine and carbamoyl phosphate: step 3/3. This chain is Argininosuccinate lyase, found in Bartonella tribocorum (strain CIP 105476 / IBS 506).